We begin with the raw amino-acid sequence, 453 residues long: Regulatory protein opaque-2 (453 aa).

The interval 145 to 243 (SSVVTSDQRS…SNRESARRSR (99 aa)) is disordered. The segment covering 146-175 (SVVTSDQRSQGSNNHTGGSSIRNNPVQNKL) has biased composition (polar residues). The span at 207 to 216 (PSDEDMDGEV) shows a compositional bias: acidic residues. Residues 224–240 (PTEERVRKKESNRESAR) show a composition bias toward basic and acidic residues. In terms of domain architecture, bZIP spans 225 to 288 (TEERVRKKES…NDANVDNRVL (64 aa)). Positions 228 to 251 (RVRKKESNRESARRSRYRKAAHLK) are basic motif. The leucine-zipper stretch occupies residues 253 to 274 (LEDQVAQLKAENSCLLRRIAAL).

This sequence belongs to the bZIP family. In terms of assembly, interacts with the Dof zinc finger protein PBF. In terms of tissue distribution, seed endosperm.

It is found in the nucleus. In terms of biological role, involved in the regulation of the endosperm-specific production of albumin b-32 and other zein proteins. It is a trans-acting transcriptional activator that binds to the consensus sequence 5'-GATGAYRTGR-3'. The chain is Regulatory protein opaque-2 (O2) from Zea mays (Maize).